The following is a 444-amino-acid chain: Multidrug resistance protein MdtA (444 aa).

A signal peptide spans 1-20 (MKSQSKRTSRLFVFVGVVVA). The span at 37–52 (NNTSGAQQSARGQDTS) shows a compositional bias: polar residues. Disordered regions lie at residues 37 to 60 (NNTS…RNTP) and 398 to 444 (TPRS…AEKS). Residues 406–419 (ANPASAEKAAAEAE) show a composition bias toward low complexity. The span at 435–444 (ARSTTAAEKS) shows a compositional bias: polar residues.

Belongs to the membrane fusion protein (MFP) (TC 8.A.1) family. As to quaternary structure, part of a tripartite efflux system composed of MdtA, MdtB and MdtC.

It localises to the cell inner membrane. This Yersinia pestis bv. Antiqua (strain Antiqua) protein is Multidrug resistance protein MdtA.